Consider the following 369-residue polypeptide: 2-aminoethylphosphonate--pyruvate transaminase (369 aa).

Position 193 is an N6-(pyridoxal phosphate)lysine (lysine 193).

The protein belongs to the class-V pyridoxal-phosphate-dependent aminotransferase family. PhnW subfamily. Homodimer. The cofactor is pyridoxal 5'-phosphate.

It carries out the reaction (2-aminoethyl)phosphonate + pyruvate = phosphonoacetaldehyde + L-alanine. Its function is as follows. Involved in phosphonate degradation. In Pseudomonas fluorescens (strain ATCC BAA-477 / NRRL B-23932 / Pf-5), this protein is 2-aminoethylphosphonate--pyruvate transaminase.